We begin with the raw amino-acid sequence, 253 residues long: Chitooligosaccharide deacetylase (253 aa).

Residues His61 and His126 each contribute to the Mg(2+) site.

It belongs to the YdjC deacetylase family. ChbG subfamily. In terms of assembly, homodimer. It depends on Mg(2+) as a cofactor.

Its subcellular location is the cytoplasm. The enzyme catalyses N,N'-diacetylchitobiose + H2O = N-acetyl-beta-D-glucosaminyl-(1-&gt;4)-D-glucosamine + acetate. The catalysed reaction is diacetylchitobiose-6'-phosphate + H2O = N'-monoacetylchitobiose-6'-phosphate + acetate. It participates in glycan degradation; chitin degradation. Its function is as follows. Involved in the degradation of chitin. ChbG is essential for growth on the acetylated chitooligosaccharides chitobiose and chitotriose but is dispensable for growth on cellobiose and chitosan dimer, the deacetylated form of chitobiose. Deacetylation of chitobiose-6-P and chitotriose-6-P is necessary for both the activation of the chb promoter by the regulatory protein ChbR and the hydrolysis of phosphorylated beta-glucosides by the phospho-beta-glucosidase ChbF. Catalyzes the removal of only one acetyl group from chitobiose-6-P to yield monoacetylchitobiose-6-P, the inducer of ChbR and the substrate of ChbF. The polypeptide is Chitooligosaccharide deacetylase (Yersinia pestis bv. Antiqua (strain Angola)).